We begin with the raw amino-acid sequence, 439 residues long: Xaa-Pro dipeptidase (439 aa).

Residues aspartate 244, aspartate 255, histidine 335, glutamate 380, and glutamate 419 each coordinate Mn(2+).

Belongs to the peptidase M24B family. Bacterial-type prolidase subfamily. Mn(2+) serves as cofactor.

It catalyses the reaction Xaa-L-Pro dipeptide + H2O = an L-alpha-amino acid + L-proline. In terms of biological role, splits dipeptides with a prolyl residue in the C-terminal position. The protein is Xaa-Pro dipeptidase of Shewanella sp. (strain ANA-3).